Here is a 182-residue protein sequence, read N- to C-terminus: 5-formyltetrahydrofolate cyclo-ligase (182 aa).

Residues 1 to 21 form a disordered region; that stretch reads MIRQRRRALTPEQQQEMGQQA. A compositionally biased stretch (polar residues) spans 11-21; that stretch reads PEQQQEMGQQA. Residues 128–135 and D167 each bind ATP; that span reads GMGGGFYD.

The protein belongs to the 5-formyltetrahydrofolate cyclo-ligase family.

It catalyses the reaction (6S)-5-formyl-5,6,7,8-tetrahydrofolate + ATP = (6R)-5,10-methenyltetrahydrofolate + ADP + phosphate. It functions in the pathway one-carbon metabolism; tetrahydrofolate interconversion. Functionally, involved in the removal of 5-formyltetrahydrofolate. In vitro, it is a potent inhibitor of various folate-dependent enzymes in the C1 metabolism network and in vivo it might function as a folate storage. 5-formyltetrahydrofolate is also used as an antifolate rescue agent in cancer chemotherapy. Catalyzes the irreversible ATP-dependent transformation of 5-formyltetrahydrofolate (5-CHO-THF) to form 5,10-methenyltetrahydrofolate (5,10-CH=THF). The reverse reaction is catalyzed by the serine hydroxymethyltransferase GlyA (SHMT). The polypeptide is 5-formyltetrahydrofolate cyclo-ligase (ygfA) (Escherichia coli O157:H7).